Here is a 437-residue protein sequence, read N- to C-terminus: Arginine biosynthesis bifunctional protein ArgJ, mitochondrial (437 aa).

The substrate site is built by threonine 173, lysine 200, threonine 211, glutamate 297, asparagine 432, and serine 437. Catalysis depends on threonine 211, which acts as the Nucleophile.

The protein belongs to the ArgJ family. As to quaternary structure, heterodimer of an alpha and a beta chain. Post-translationally, the alpha and beta chains are autoproteolytically processed from a single precursor protein within the mitochondrion.

The protein localises to the mitochondrion matrix. It carries out the reaction N(2)-acetyl-L-ornithine + L-glutamate = N-acetyl-L-glutamate + L-ornithine. The enzyme catalyses L-glutamate + acetyl-CoA = N-acetyl-L-glutamate + CoA + H(+). It participates in amino-acid biosynthesis; L-arginine biosynthesis; L-ornithine and N-acetyl-L-glutamate from L-glutamate and N(2)-acetyl-L-ornithine (cyclic): step 1/1. It functions in the pathway amino-acid biosynthesis; L-arginine biosynthesis; N(2)-acetyl-L-ornithine from L-glutamate: step 1/4. In terms of biological role, catalyzes two activities which are involved in the cyclic version of arginine biosynthesis: the synthesis of acetylglutamate from glutamate and acetyl-CoA, and of ornithine by transacetylation between acetylornithine and glutamate. This Zygosaccharomyces rouxii (strain ATCC 2623 / CBS 732 / NBRC 1130 / NCYC 568 / NRRL Y-229) protein is Arginine biosynthesis bifunctional protein ArgJ, mitochondrial.